The following is a 521-amino-acid chain: Tetratricopeptide repeat and J domain-containing co-chaperone DNJ1 (521 aa).

An N-terminal signal peptide occupies residues 1 to 21 (MHLNLAGLAVAATAFLATASA). TPR repeat units lie at residues 33 to 66 (VSNL…DPTN), 67 to 100 (YLSL…KPGF), 102 to 134 (GAHL…PKSA), 176 to 209 (PHLR…KPGD), 211 to 244 (SPHI…DPDS), 315 to 348 (LENL…NPDS), and 349 to 382 (FWGL…RPDQ). The J domain maps to 404-473 (DYYKVLGVEN…ELRARFDRGD (70 aa)). Residues 464 to 474 (ELRARFDRGDD) show a composition bias toward basic and acidic residues. The tract at residues 464-521 (ELRARFDRGDDPNSQERPNPFQGQGNPFGGGHPFMFQQGGGGGGPNIKFQFGGQPFGF) is disordered. Gly residues predominate over residues 489–508 (NPFGGGHPFMFQQGGGGGGP). Positions 509 to 521 (NIKFQFGGQPFGF) are enriched in low complexity.

It localises to the endoplasmic reticulum lumen. Its function is as follows. Endoplasmic reticulum co-chaperone required for the of virulence factors such as PG1, the major endopolygalacturonase produced during the infection of tomato plants. The sequence is that of Tetratricopeptide repeat and J domain-containing co-chaperone DNJ1 from Fusarium oxysporum f. sp. lycopersici (strain 4287 / CBS 123668 / FGSC 9935 / NRRL 34936) (Fusarium vascular wilt of tomato).